We begin with the raw amino-acid sequence, 295 residues long: Pyridoxal 5'-phosphate synthase subunit PdxS (295 aa).

Residue Asp-25 participates in D-ribose 5-phosphate binding. Lys-82 functions as the Schiff-base intermediate with D-ribose 5-phosphate in the catalytic mechanism. Residue Gly-154 coordinates D-ribose 5-phosphate. Arg-166 is a binding site for D-glyceraldehyde 3-phosphate. Residues Gly-215 and 236–237 (GS) contribute to the D-ribose 5-phosphate site.

It belongs to the PdxS/SNZ family. In the presence of PdxT, forms a dodecamer of heterodimers.

It catalyses the reaction aldehydo-D-ribose 5-phosphate + D-glyceraldehyde 3-phosphate + L-glutamine = pyridoxal 5'-phosphate + L-glutamate + phosphate + 3 H2O + H(+). Its pathway is cofactor biosynthesis; pyridoxal 5'-phosphate biosynthesis. Catalyzes the formation of pyridoxal 5'-phosphate from ribose 5-phosphate (RBP), glyceraldehyde 3-phosphate (G3P) and ammonia. The ammonia is provided by the PdxT subunit. Can also use ribulose 5-phosphate and dihydroxyacetone phosphate as substrates, resulting from enzyme-catalyzed isomerization of RBP and G3P, respectively. This chain is Pyridoxal 5'-phosphate synthase subunit PdxS, found in Bacillus cytotoxicus (strain DSM 22905 / CIP 110041 / 391-98 / NVH 391-98).